Reading from the N-terminus, the 246-residue chain is MAFLRSMWGVLSALGRSGAAVCIGCGSRLRSPFSFVYLPKCFSSVLASCPKKPVSSYLRFSKEQLPIFKAENPDAKPTELIRRIAKLWRELPDSKKKIYQDAYRADWQVYKEKISRFKEQLTPSQITSLEKEIMDKHLKRKAMTKRKELTQLGKPKRPRSAYNVYVAEKFQEAKGDSPQEKLKTVKENWKNLSDSEKELYIRLAKEDEIRYHNEMKSWEEQMIEAGRKDLLRRTIKQRQKYGAEEY.

Residues 1 to 42 constitute a mitochondrion transit peptide; the sequence is MAFLRSMWGVLSALGRSGAAVCIGCGSRLRSPFSFVYLPKCF. Residues 50–118 constitute a DNA-binding region (HMG box 1); that stretch reads PKKPVSSYLR…VYKEKISRFK (69 aa). Residues serine 55, serine 56, and serine 61 each carry the phosphoserine; by PKA modification. Phosphothreonine is present on threonine 122. A DNA-binding region (HMG box 2) is located at residues 155-219; sequence PKRPRSAYNV…RYHNEMKSWE (65 aa). Serine 160 carries the post-translational modification Phosphoserine; by PKA. Residues serine 193 and serine 195 each carry the phosphoserine modification.

As to quaternary structure, monomer; binds DNA as a monomer. Homodimer. Component of the mitochondrial transcription initiation complex, composed at least of TFB2M, TFAM and POLRMT. In this complex TFAM recruits POLRMT to the promoter whereas TFB2M induces structural changes in POLRMT to enable promoter opening and trapping of the DNA non-template strand. Upon metabolic stress, forms a complex composed of FOXO3, SIRT3, TFAM and POLRMT. Interacts with TFB1M and TFB2M. Interacts with CLPX; this enhances DNA-binding. Phosphorylation by PKA within the HMG box 1 impairs DNA binding and promotes degradation by the AAA+ Lon protease.

The protein localises to the mitochondrion. It localises to the mitochondrion matrix. Its subcellular location is the mitochondrion nucleoid. Binds to the mitochondrial light strand promoter and functions in mitochondrial transcription regulation. Component of the mitochondrial transcription initiation complex, composed at least of TFB2M, TFAM and POLRMT that is required for basal transcription of mitochondrial DNA. In this complex, TFAM recruits POLRMT to a specific promoter whereas TFB2M induces structural changes in POLRMT to enable promoter opening and trapping of the DNA non-template strand. Required for accurate and efficient promoter recognition by the mitochondrial RNA polymerase. Promotes transcription initiation from the HSP1 and the light strand promoter by binding immediately upstream of transcriptional start sites. Is able to unwind DNA. Bends the mitochondrial light strand promoter DNA into a U-turn shape via its HMG boxes. Required for maintenance of normal levels of mitochondrial DNA. May play a role in organizing and compacting mitochondrial DNA. In Trachypithecus cristatus (Silvered leaf-monkey), this protein is Transcription factor A, mitochondrial.